Reading from the N-terminus, the 292-residue chain is Succinate dehydrogenase assembly factor 2, mitochondrial (292 aa).

Disordered stretches follow at residues 27–68 (RSFG…NTTS) and 266–292 (TGFH…VFDS). Polar residues predominate over residues 55–68 (TNRPPNQHVPNTTS).

This sequence belongs to the SDHAF2 family. Interacts with the flavoprotein subunit within the SDH catalytic dimer.

Its subcellular location is the mitochondrion matrix. In terms of biological role, plays an essential role in the assembly of succinate dehydrogenase (SDH), an enzyme complex (also referred to as respiratory complex II) that is a component of both the tricarboxylic acid (TCA) cycle and the mitochondrial electron transport chain, and which couples the oxidation of succinate to fumarate with the reduction of ubiquinone (coenzyme Q) to ubiquinol. Required for flavinylation (covalent attachment of FAD) of the flavoprotein subunit of the SDH catalytic dimer. The protein is Succinate dehydrogenase assembly factor 2, mitochondrial of Aspergillus flavus (strain ATCC 200026 / FGSC A1120 / IAM 13836 / NRRL 3357 / JCM 12722 / SRRC 167).